The chain runs to 275 residues: Methylglyoxal reductase DkgA (275 aa).

Catalysis depends on Tyr-51, which acts as the Proton donor. Residue His-107 participates in substrate binding. 187–241 (SPLAQGGKGVFDQKVIRDLADKYGKTPAQIVIRWHLDSGLVVIPKSVTPSRIAEN) serves as a coordination point for NADP(+).

The protein belongs to the aldo/keto reductase family. In terms of assembly, monomer.

The protein resides in the cytoplasm. It catalyses the reaction hydroxyacetone + NADP(+) = methylglyoxal + NADPH + H(+). In terms of biological role, aldo-keto reductase that significantly contributes to cellular methylglyoxal detoxification by catalyzing the NADPH-dependent conversion of methylglyoxal to acetol. The chain is Methylglyoxal reductase DkgA from Escherichia coli O157:H7.